We begin with the raw amino-acid sequence, 527 residues long: Bifunctional purine biosynthesis protein PurH (527 aa).

An MGS-like domain is found at 1 to 149; that stretch reads MASDFLPVRR…KNFARVAVAT (149 aa).

It belongs to the PurH family.

The enzyme catalyses (6R)-10-formyltetrahydrofolate + 5-amino-1-(5-phospho-beta-D-ribosyl)imidazole-4-carboxamide = 5-formamido-1-(5-phospho-D-ribosyl)imidazole-4-carboxamide + (6S)-5,6,7,8-tetrahydrofolate. It carries out the reaction IMP + H2O = 5-formamido-1-(5-phospho-D-ribosyl)imidazole-4-carboxamide. It functions in the pathway purine metabolism; IMP biosynthesis via de novo pathway; 5-formamido-1-(5-phospho-D-ribosyl)imidazole-4-carboxamide from 5-amino-1-(5-phospho-D-ribosyl)imidazole-4-carboxamide (10-formyl THF route): step 1/1. Its pathway is purine metabolism; IMP biosynthesis via de novo pathway; IMP from 5-formamido-1-(5-phospho-D-ribosyl)imidazole-4-carboxamide: step 1/1. The protein is Bifunctional purine biosynthesis protein PurH of Xanthomonas oryzae pv. oryzae (strain KACC10331 / KXO85).